The chain runs to 253 residues: Uridylate kinase (253 aa).

Lys-26 to Gly-29 serves as a coordination point for ATP. Gly-68 is a UMP binding site. ATP contacts are provided by Gly-69 and Arg-73. UMP is bound by residues Asp-88 and Thr-149–Thr-156. Residues Thr-176, Tyr-182, and Asp-185 each contribute to the ATP site.

Belongs to the UMP kinase family. In terms of assembly, homohexamer.

It is found in the cytoplasm. It catalyses the reaction UMP + ATP = UDP + ADP. It functions in the pathway pyrimidine metabolism; CTP biosynthesis via de novo pathway; UDP from UMP (UMPK route): step 1/1. Its activity is regulated as follows. Inhibited by UTP. Its function is as follows. Catalyzes the reversible phosphorylation of UMP to UDP. This Chromohalobacter salexigens (strain ATCC BAA-138 / DSM 3043 / CIP 106854 / NCIMB 13768 / 1H11) protein is Uridylate kinase.